We begin with the raw amino-acid sequence, 333 residues long: MAGNIEVEEDDRVPLRLRPEWSDVTPIPQDDGPSPVVPINYSEEFSEVMDYFRAVYFAKELSSRALALTAEAIGLNAGNYTVWHFRRLLLESLKVDLHVEREFVERVASGNSKNYQIWHHRRWVAEKLGPEARNSELEFTKKILSVDAKHYHAWSHRQWVLQNLGGWEDELSYCSELLAEDIFNNSAWNQRYFVITRSPVLGGLKAMRESEVLFTVEAIISYPENESSWRYLRGLFKDESTLYVNDAQVSSLCLKILKTKSNYLFALSTLLDLSASVIQPNEDFRDAIEALRLQILIKQDSDIAITICSILEQVDPIRVNYWVWRKSRLPQAA.

PFTA repeat units lie at residues 61–95 (LSSRALALTAEAIGLNAGNYTVWHFRRLLLESLKV), 96–130 (DLHVEREFVERVASGNSKNYQIWHHRRWVAEKLGP), 132–166 (ARNSELEFTKKILSVDAKHYHAWSHRQWVLQNLGG), 167–200 (WEDELSYCSELLAEDIFNNSAWNQRYFVITRSPV), and 207–241 (MRESEVLFTVEAIISYPENESSWRYLRGLFKDEST).

It belongs to the protein prenyltransferase subunit alpha family. In terms of assembly, heterodimer of FTA and FTB (farnesyltransferase). Heterodimer of an alpha and a beta subunit. The cofactor is Mg(2+).

It carries out the reaction L-cysteinyl-[protein] + (2E,6E)-farnesyl diphosphate = S-(2E,6E)-farnesyl-L-cysteinyl-[protein] + diphosphate. The catalysed reaction is geranylgeranyl diphosphate + L-cysteinyl-[protein] = S-geranylgeranyl-L-cysteinyl-[protein] + diphosphate. Its function is as follows. Essential subunit of both the farnesyltransferase and the geranylgeranyltransferase complex. Contributes to the transfer of a farnesyl or geranylgeranyl moiety from farnesyl or geranylgeranyl diphosphate to a cysteine at the fourth position from the C-terminus of several proteins having the C-terminal sequence Cys-aliphatic-aliphatic-X. This Pisum sativum (Garden pea) protein is Protein farnesyltransferase/geranylgeranyltransferase type-1 subunit alpha (FTA).